The following is a 283-amino-acid chain: Alkaline ceramidase (283 aa).

Ca(2+) is bound by residues Asp28, Trp29, Glu31, Asn33, and Glu42. A run of 2 helical transmembrane segments spans residues 43–63 and 69–89; these read FVNT…IMLF and FVTP…LSSM. Zn(2+) is bound at residue His92. The next 4 helical transmembrane spans lie at 98–118, 134–151, 154–174, and 187–209; these read IGQL…FSLF, TFSW…GLSW, PIVN…MLYT, and LGIR…RIFC. His221 and His225 together coordinate Zn(2+). A helical membrane pass occupies residues 222 to 242; that stretch reads GFWHIFIFIAAYTVLVLFAYF.

Belongs to the alkaline ceramidase family. The cofactor is Zn(2+). Expressed in the central midgut of late embryos. In brain, it is present at the interhemispheric junction and in groups of cells in the central brain.

The protein resides in the membrane. The enzyme catalyses an N-acylsphing-4-enine + H2O = sphing-4-enine + a fatty acid. Functionally, hydrolyzes the sphingolipid ceramide into sphingosine and free fatty acid. This Drosophila melanogaster (Fruit fly) protein is Alkaline ceramidase (bwa).